A 362-amino-acid polypeptide reads, in one-letter code: 3-dehydroquinate synthase (362 aa).

NAD(+) is bound by residues S72–K77, G106–D110, T130–T131, K142, and K151. Residues E184, H246, and H263 each contribute to the Zn(2+) site.

It belongs to the sugar phosphate cyclases superfamily. Dehydroquinate synthase family. Requires NAD(+) as cofactor. Co(2+) is required as a cofactor. Zn(2+) serves as cofactor.

It localises to the cytoplasm. It carries out the reaction 7-phospho-2-dehydro-3-deoxy-D-arabino-heptonate = 3-dehydroquinate + phosphate. Its pathway is metabolic intermediate biosynthesis; chorismate biosynthesis; chorismate from D-erythrose 4-phosphate and phosphoenolpyruvate: step 2/7. Catalyzes the conversion of 3-deoxy-D-arabino-heptulosonate 7-phosphate (DAHP) to dehydroquinate (DHQ). The polypeptide is 3-dehydroquinate synthase (Bacillus subtilis (strain 168)).